Here is a 1434-residue protein sequence, read N- to C-terminus: Inositol hexakisphosphate and diphosphoinositol-pentakisphosphate kinase 1 (1434 aa).

66–67 (KK) contributes to the substrate binding site. ATP is bound by residues Arg-147, Lys-200, His-207, Arg-226, 250 to 253 (EEFM), and 259 to 261 (DVK). 226–227 (RK) is a binding site for substrate. Substrate contacts are provided by Lys-261 and Arg-275. ATP is bound by residues Ser-277, Asp-322, and 334-336 (DVN). Residue 339–342 (SFVK) coordinates substrate. A polyphosphoinositide-binding domain region spans residues 384–455 (PTTSGTMMEL…VLDITRLLLA (72 aa)). The interval 916 to 1017 (EGSAPAGCGF…PTEMKQSGLG (102 aa)) is disordered. 2 positions are modified to phosphoserine: Ser-941 and Ser-984. A compositionally biased stretch (polar residues) spans 1002 to 1017 (FSSSRPPTEMKQSGLG). 4 positions are modified to phosphoserine: Ser-1034, Ser-1070, Ser-1142, and Ser-1149. 3 disordered regions span residues 1133–1193 (NHQA…GFSD), 1228–1251 (ESTQSPQEPPVEISPPGSQDDTEV), and 1396–1434 (TDNPSQELSEETDLQAQEVSEEIDQEPEVVDELSNEDIS). The span at 1165 to 1183 (SSGPSSTVSSAGPSSPTTV) shows a compositional bias: low complexity. Positions 1403 to 1434 (LSEETDLQAQEVSEEIDQEPEVVDELSNEDIS) are enriched in acidic residues.

It belongs to the histidine acid phosphatase family. VIP1 subfamily.

It is found in the cytoplasm. The protein resides in the cytosol. It localises to the cell membrane. It carries out the reaction 1D-myo-inositol hexakisphosphate + ATP = 1-diphospho-1D-myo-inositol 2,3,4,5,6-pentakisphosphate + ADP. The enzyme catalyses 5-diphospho-1D-myo-inositol 1,2,3,4,6-pentakisphosphate + ATP + H(+) = 1,5-bis(diphospho)-1D-myo-inositol 2,3,4,6-tetrakisphosphate + ADP. Its function is as follows. Bifunctional inositol kinase that acts in concert with the IP6K kinases IP6K1, IP6K2 and IP6K3 to synthesize the diphosphate group-containing inositol pyrophosphates diphosphoinositol pentakisphosphate, PP-InsP5, and bis-diphosphoinositol tetrakisphosphate, (PP)2-InsP4. PP-InsP5 and (PP)2-InsP4, also respectively called InsP7 and InsP8, regulate a variety of cellular processes, including apoptosis, vesicle trafficking, cytoskeletal dynamics, exocytosis, insulin signaling and neutrophil activation. Phosphorylates inositol hexakisphosphate (InsP6) at position 1 to produce PP-InsP5 which is in turn phosphorylated by IP6Ks to produce (PP)2-InsP4. Alternatively, phosphorylates PP-InsP5 at position 1, produced by IP6Ks from InsP6, to produce (PP)2-InsP4. Activated when cells are exposed to hyperosmotic stress. The sequence is that of Inositol hexakisphosphate and diphosphoinositol-pentakisphosphate kinase 1 from Rattus norvegicus (Rat).